The following is a 320-amino-acid chain: 1-aminocyclopropane-1-carboxylate oxidase 3 (320 aa).

In terms of domain architecture, Fe2OG dioxygenase spans 153-253 (PNFGTKVSNY…RMSLASFYNP (101 aa)). Fe cation is bound by residues histidine 177, aspartate 179, and histidine 234.

The protein belongs to the iron/ascorbate-dependent oxidoreductase family. The cofactor is Fe cation.

It carries out the reaction 1-aminocyclopropane-1-carboxylate + L-ascorbate + O2 = ethene + L-dehydroascorbate + hydrogen cyanide + CO2 + 2 H2O. The protein operates within alkene biosynthesis; ethylene biosynthesis via S-adenosyl-L-methionine; ethylene from S-adenosyl-L-methionine: step 2/2. In Petunia hybrida (Petunia), this protein is 1-aminocyclopropane-1-carboxylate oxidase 3 (ACO3).